A 263-amino-acid polypeptide reads, in one-letter code: Outer membrane protein OmpK (263 aa).

Residues 1 to 20 form the signal peptide; that stretch reads MRKSLLALSLLAATSAPVLA.

The protein belongs to the nucleoside-specific channel-forming outer membrane porin (Tsx) (TC 1.B.10) family.

The protein localises to the cell outer membrane. Its function is as follows. Serves as receptor for a broad-host-range vibriophage, KVP40. The protein is Outer membrane protein OmpK of Vibrio parahaemolyticus.